A 207-amino-acid chain; its full sequence is Inner membrane-spanning protein YciB (207 aa).

The next 6 helical transmembrane spans lie at 3-23 (FLFD…AEGQ), 51-71 (VLLA…WLLL), 78-98 (TMLW…VWFH), 105-125 (WKPS…HAVF), 150-170 (FMWI…AYSF), and 178-198 (FKLF…GLYL).

It belongs to the YciB family.

The protein resides in the cell inner membrane. Plays a role in cell envelope biogenesis, maintenance of cell envelope integrity and membrane homeostasis. The chain is Inner membrane-spanning protein YciB from Methylibium petroleiphilum (strain ATCC BAA-1232 / LMG 22953 / PM1).